A 226-amino-acid polypeptide reads, in one-letter code: N-(5'-phosphoribosyl)anthranilate isomerase (226 aa).

The protein belongs to the TrpF family.

It carries out the reaction N-(5-phospho-beta-D-ribosyl)anthranilate = 1-(2-carboxyphenylamino)-1-deoxy-D-ribulose 5-phosphate. It functions in the pathway amino-acid biosynthesis; L-tryptophan biosynthesis; L-tryptophan from chorismate: step 3/5. This chain is N-(5'-phosphoribosyl)anthranilate isomerase, found in Synechococcus sp. (strain JA-3-3Ab) (Cyanobacteria bacterium Yellowstone A-Prime).